Consider the following 207-residue polypeptide: Superoxide dismutase [Mn] (207 aa).

Residues H28, H76, D160, and H164 each contribute to the Mn(2+) site.

Belongs to the iron/manganese superoxide dismutase family. The cofactor is Mn(2+).

It carries out the reaction 2 superoxide + 2 H(+) = H2O2 + O2. Destroys superoxide anion radicals which are normally produced within the cells and which are toxic to biological systems. This is Superoxide dismutase [Mn] (sodA) from Mycolicibacterium fortuitum (Mycobacterium fortuitum).